A 149-amino-acid chain; its full sequence is Myosin, essential light chain (149 aa).

EF-hand domains are found at residues Ser-7–Asn-42 and Gly-79–Lys-114.

Myosin is a hexamer of 2 heavy chains and 4 light chains (two regulatory light chains and two essential light chains).

This Branchiostoma floridae (Florida lancelet) protein is Myosin, essential light chain.